The following is a 684-amino-acid chain: Probable metal-nicotianamine transporter YSL9 (684 aa).

A compositionally biased stretch (basic residues) spans 1-10 (MKQERRRKRQ). The segment at 1–55 (MKQERRRKRQPGPPRLELVVAHPREEEMAGLDGGGDAEEGATHARGGGGAPPPWR) is disordered. 14 helical membrane-spanning segments follow: residues 58–78 (LTAR…VIVM), 82–102 (LTTG…FVVL), 130–150 (CAVA…LLGL), 174–194 (GIAW…LALV), 234–254 (VNGF…QWFY), 295–315 (LVNL…WPLI), 341–361 (FICV…IVAL), 402–422 (LAFS…PMMF), 430–450 (VVIA…GAGL), 462–482 (IALF…AGLV), 515–535 (IIAQ…TFFL), 568–588 (FSAL…FAVA), 612–632 (VPFL…LIVF), and 642–662 (AALM…LWIF).

This sequence belongs to the YSL (TC 2.A.67.2) family.

Its subcellular location is the membrane. Functionally, may be involved in the transport of nicotianamine-chelated metals. The protein is Probable metal-nicotianamine transporter YSL9 (YSL9) of Oryza sativa subsp. japonica (Rice).